The sequence spans 522 residues: Cytochrome P450 monooxygenase AKT7 (522 aa).

A helical transmembrane segment spans residues 10 to 30 (LYVTCTVLAALILGYIQAMII). Cys452 serves as a coordination point for heme.

The protein belongs to the cytochrome P450 family. The cofactor is heme.

The protein localises to the membrane. Its pathway is mycotoxin biosynthesis. Cytochrome P450 monooxygenase; part of the gene clusters that mediate the biosynthesis of the host-selective toxins (HSTs) AK-toxins responsible for Japanese pear black spot disease by the Japanese pear pathotype. AK-toxins are esters of 9,10-epoxy 8-hydroxy 9-methyldecatrienoic acid (EDA). On cellular level, AK-toxins affect plasma membrane of susceptible cells and cause a sudden increase in loss of K(+) after a few minutes of toxin treatment. The acyl-CoA ligase AKT1, the hydrolase AKT2 and enoyl-CoA hydratase AKT3 are all involved in the biosynthesis of the AK-, AF- and ACT-toxin common 9,10-epoxy-8-hydroxy-9-methyl-decatrienoic acid (EDA) structural moiety. Part of the EDA biosynthesis occurs in the peroxisome since these 3 enzymes are localized in peroxisomes. The exact roles of the 3 enzymes, as well as of additional AK-toxin clusters enzymes, including AKT4, AKT6 and AKTS1, have still to be elucidated. The Cytochrome P450 monooxygenase AKT7 on the other side functions to limit production of EDA and AK-toxin, probably via the catalysis of a side reaction of EDA or its precursor. The chain is Cytochrome P450 monooxygenase AKT7 from Alternaria alternata (Alternaria rot fungus).